A 131-amino-acid polypeptide reads, in one-letter code: Phosphoribosyl-AMP cyclohydrolase (131 aa).

A Mg(2+)-binding site is contributed by D78. Zn(2+) is bound at residue C79. 2 residues coordinate Mg(2+): D80 and D82. The Zn(2+) site is built by C96 and C103.

The protein belongs to the PRA-CH family. In terms of assembly, homodimer. Requires Mg(2+) as cofactor. The cofactor is Zn(2+).

It localises to the cytoplasm. The catalysed reaction is 1-(5-phospho-beta-D-ribosyl)-5'-AMP + H2O = 1-(5-phospho-beta-D-ribosyl)-5-[(5-phospho-beta-D-ribosylamino)methylideneamino]imidazole-4-carboxamide. It participates in amino-acid biosynthesis; L-histidine biosynthesis; L-histidine from 5-phospho-alpha-D-ribose 1-diphosphate: step 3/9. Its function is as follows. Catalyzes the hydrolysis of the adenine ring of phosphoribosyl-AMP. This chain is Phosphoribosyl-AMP cyclohydrolase, found in Neisseria gonorrhoeae (strain ATCC 700825 / FA 1090).